Consider the following 866-residue polypeptide: Interleukin-17 receptor A (866 aa).

The signal sequence occupies residues 1–32; that stretch reads MGAARSPPSAVPGPLLGLLLLLLGVLAPGGAS. Residues 33–320 are Extracellular-facing; sequence LRLLDHRALV…EPIPDYMPLW (288 aa). A disulfide bond links cysteine 43 and cysteine 50. Residues asparagine 49, asparagine 54, and asparagine 67 are each glycosylated (N-linked (GlcNAc...) asparagine). 2 cysteine pairs are disulfide-bonded: cysteine 57–cysteine 126 and cysteine 185–cysteine 196. 4 N-linked (GlcNAc...) asparagine glycosylation sites follow: asparagine 206, asparagine 225, asparagine 242, and asparagine 265. Cystine bridges form between cysteine 245–cysteine 276, cysteine 277–cysteine 303, and cysteine 290–cysteine 294. A helical transmembrane segment spans residues 321-341; it reads VYWFITGISILLVGSVILLIV. The Cytoplasmic portion of the chain corresponds to 342-866; the sequence is CMTWRLAGPG…MGSESEGPSA (525 aa). The SEFIR domain occupies 377 to 534; sequence PRKVWIIYSA…LMDRFEEVYF (158 aa). 2 positions are modified to phosphoserine: serine 708 and serine 736. Disordered regions lie at residues 717–736 and 773–840; these read LFLPVDPEDSPLGSSTPMAS and MVLT…RSLQ. Residues 788 to 801 are compositionally biased toward polar residues; that stretch reads QSVQSDQGYISRSS. The span at 809-819 shows a compositional bias: acidic residues; it reads TEMEEEEEEEQ.

Forms heterodimers with IL17RC; the heterodimer binds IL17A and IL17F homodimers as well as the heterodimer formed by IL17A and IL17F. Forms complexes with 2:1 binding stoichiometry: two receptor chains for one interleukin molecule. IL17A homodimer preferentially drives the formation of IL17RA-IL17RC heterodimeric receptor complex, whereas IL17F homodimer forms predominantly complexes with IL17RC homodimer. IL17A homodimer adopts an asymmetrical ternary structure with one IL17RA molecule, allowing for high affinity interactions of one IL17A monomer with one IL17RA molecule (via D1 and D2 domains), while disfavoring binding of a second IL17RA molecule on the other IL17A monomer. IL17A-IL17F forms complexes with IL17RA-IL17RC, but with lower affinity when compared to IL17A homodimer. IL17RA chain cannot distinguish between IL17A and IL17F molecules, potentially enabling the formation of topologically distinct complexes. Interacts with TRAF3IP2. Forms heterodimers with IL17RE; the heterodimer binds IL17C. In terms of assembly, (Microbial infection) Interacts with SARS coronavirus-2/SARS-CoV-2 virus protein ORF8. Post-translationally, glycosylated. In terms of tissue distribution, widely expressed.

Its subcellular location is the cell membrane. It is found in the secreted. In terms of biological role, receptor for IL17A and IL17F, major effector cytokines of innate and adaptive immune system involved in antimicrobial host defense and maintenance of tissue integrity. Receptor for IL17A. Receptor for IL17F. Binds to IL17A with higher affinity than to IL17F. Binds IL17A and IL17F homodimers as part of a heterodimeric complex with IL17RC. Also binds heterodimers formed by IL17A and IL17F as part of a heterodimeric complex with IL17RC. Cytokine binding triggers homotypic interaction of IL17RA and IL17RC chains with TRAF3IP2 adapter, leading to TRAF6-mediated activation of NF-kappa-B and MAPkinase pathways, ultimately resulting in transcriptional activation of cytokines, chemokines, antimicrobial peptides and matrix metalloproteinases, with potential strong immune inflammation. Involved in antimicrobial host defense primarily promoting neutrophil activation and recruitment at infection sites to destroy extracellular bacteria and fungi. In secondary lymphoid organs, contributes to germinal center formation by regulating the chemotactic response of B cells to CXCL12 and CXCL13, enhancing retention of B cells within the germinal centers, B cell somatic hypermutation rate and selection toward plasma cells. Plays a role in the maintenance of the integrity of epithelial barriers during homeostasis and pathogen infection. Stimulates the production of antimicrobial beta-defensins DEFB1, DEFB103A, and DEFB104A by mucosal epithelial cells, limiting the entry of microbes through the epithelial barriers. Involved in antiviral host defense through various mechanisms. Enhances immunity against West Nile virus by promoting T cell cytotoxicity. Contributes to Influenza virus clearance by driving the differentiation of B-1a B cells, providing for production of virus-specific IgM antibodies at first line of host defense. Receptor for IL17C as part of a heterodimeric complex with IL17RE. (Microbial infection) Receptor for SARS coronavirus-2/SARS-CoV-2 virus protein ORF8, leading to IL17 pathway activation and an increased secretion of pro-inflammatory factors through activating NF-kappa-B signaling pathway. This is Interleukin-17 receptor A from Homo sapiens (Human).